We begin with the raw amino-acid sequence, 461 residues long: Spermidine/putrescine import ATP-binding protein PotA (461 aa).

The ABC transporter domain maps to 10–240 (IEVNGVSKFF…PINSFVADFI (231 aa)). 42–49 (GPSGCGKT) contacts ATP.

It belongs to the ABC transporter superfamily. Spermidine/putrescine importer (TC 3.A.1.11.1) family. The complex is composed of two ATP-binding proteins (PotA), two transmembrane proteins (PotB and PotC) and a solute-binding protein (PotD).

It is found in the cell inner membrane. It catalyses the reaction ATP + H2O + polyamine-[polyamine-binding protein]Side 1 = ADP + phosphate + polyamineSide 2 + [polyamine-binding protein]Side 1.. Part of the ABC transporter complex PotABCD involved in spermidine/putrescine import. Responsible for energy coupling to the transport system. The polypeptide is Spermidine/putrescine import ATP-binding protein PotA (Bacteroides fragilis (strain YCH46)).